The sequence spans 1401 residues: DNA-directed RNA polymerase subunit beta' (1401 aa).

4 residues coordinate Zn(2+): C70, C72, C85, and C88. Mg(2+) contacts are provided by D460, D462, and D464. Zn(2+) contacts are provided by C808, C882, C889, and C892.

It belongs to the RNA polymerase beta' chain family. The RNAP catalytic core consists of 2 alpha, 1 beta, 1 beta' and 1 omega subunit. When a sigma factor is associated with the core the holoenzyme is formed, which can initiate transcription. The cofactor is Mg(2+). Zn(2+) is required as a cofactor.

It catalyses the reaction RNA(n) + a ribonucleoside 5'-triphosphate = RNA(n+1) + diphosphate. Its function is as follows. DNA-dependent RNA polymerase catalyzes the transcription of DNA into RNA using the four ribonucleoside triphosphates as substrates. This chain is DNA-directed RNA polymerase subunit beta', found in Legionella pneumophila subsp. pneumophila (strain Philadelphia 1 / ATCC 33152 / DSM 7513).